Reading from the N-terminus, the 208-residue chain is Imidazole glycerol phosphate synthase subunit HisH (208 aa).

The Glutamine amidotransferase type-1 domain maps to 1–206 (MIVIIDYDTG…KEVTYSCKSS (206 aa)). The active-site Nucleophile is the Cys-79. Catalysis depends on residues His-181 and Glu-183.

In terms of assembly, heterodimer of HisH and HisF.

It is found in the cytoplasm. It catalyses the reaction 5-[(5-phospho-1-deoxy-D-ribulos-1-ylimino)methylamino]-1-(5-phospho-beta-D-ribosyl)imidazole-4-carboxamide + L-glutamine = D-erythro-1-(imidazol-4-yl)glycerol 3-phosphate + 5-amino-1-(5-phospho-beta-D-ribosyl)imidazole-4-carboxamide + L-glutamate + H(+). The catalysed reaction is L-glutamine + H2O = L-glutamate + NH4(+). It participates in amino-acid biosynthesis; L-histidine biosynthesis; L-histidine from 5-phospho-alpha-D-ribose 1-diphosphate: step 5/9. Functionally, IGPS catalyzes the conversion of PRFAR and glutamine to IGP, AICAR and glutamate. The HisH subunit catalyzes the hydrolysis of glutamine to glutamate and ammonia as part of the synthesis of IGP and AICAR. The resulting ammonia molecule is channeled to the active site of HisF. In Listeria monocytogenes serotype 4a (strain HCC23), this protein is Imidazole glycerol phosphate synthase subunit HisH.